A 707-amino-acid polypeptide reads, in one-letter code: Casein kinase 1-like protein HD16 (707 aa).

Residues 19-67 are disordered; that stretch reads YDVQDADPAASPVSPAPRGRTGRRGGAAAGRGNKTVAEGGGRKALKPRG. Low complexity predominate over residues 24 to 37; it reads ADPAASPVSPAPRG. The Protein kinase domain occupies 147-425; that stretch reads YITDRKLGKG…KLISLFDGLI (279 aa). ATP contacts are provided by residues 153 to 161 and lysine 184; that span reads LGKGGFGQV. The Proton acceptor role is filled by aspartate 276.

Belongs to the protein kinase superfamily. CK1 Ser/Thr protein kinase family. Casein kinase I subfamily. Monomer. Interacts with GHD7 (via C-terminus). Interacts with SLR1. Post-translationally, autophosphorylated. In terms of tissue distribution, expressed in roots, leaves and stems. Expressed in leaf vascular bundles, and proximal regions of the shoot and roots.

It is found in the cytoplasm. The protein localises to the nucleus. The enzyme catalyses L-seryl-[protein] + ATP = O-phospho-L-seryl-[protein] + ADP + H(+). The catalysed reaction is L-threonyl-[protein] + ATP = O-phospho-L-threonyl-[protein] + ADP + H(+). Functionally, casein kinases are operationally defined by their preferential utilization of acidic proteins such as caseins as substrates. It can phosphorylate a large number of proteins. Can phosphorylate casein on threonine residues in vitro. Involved in the regulation of flowering time through gibberellin (GA) signaling, and independently of photoperiod. Phosphorylates the DELLA protein SLR1, stabilizing SLR1 protein and sustaining SLR1 activity as repressor of GA signaling. Required for normal development of male floral organs and grains, through modulation of GA signaling. Targeted and repressed by the homeobox protein HAZ1 during GA signaling. Can phosphorylate phosvitin and SLR1 in vitro. Is not required for clock function in either the presence or the absence of light signals. Involved in a genetic control pathway for photoperiodic flowering under long day (LD) conditions that includes HD1, GHD7, HD5 and HD2. Phosphorylates and activates GHD7, a major floral repressor under LD conditions. Phosphorylation of GHD7 enhances its function in the repression of EHD1, HD3A and HD3B/RFT1, and obviously delaying flowering. This is Casein kinase 1-like protein HD16 from Oryza sativa subsp. japonica (Rice).